We begin with the raw amino-acid sequence, 2271 residues long: Serine-rich adhesin for platelets (2271 aa).

The first 89 residues, 1 to 89, serve as a signal peptide directing secretion; it reads MSKRQKAFHD…VNMLHDQQAF (89 aa). The segment at 90-230 is serine-rich repeat region 1, SRR1; sequence AASDAPLTSE…KTSTTSTSTA (141 aa). Polar residues predominate over residues 100 to 111; it reads LNTQSETVGNQN. 3 disordered regions span residues 100 to 229, 751 to 791, and 806 to 2243; these read LNTQ…STST, NSMS…VVST, and SVSA…GLLG. Over residues 112–128 the composition is skewed to low complexity; it reads STTIEASTSTADSTSVT. Residues 129–140 show a composition bias toward polar residues; it reads KNSSSVQTSNSD. Residues 150-229 are compositionally biased toward low complexity; that stretch reads VTSTTNSTSN…NKTSTTSTST (80 aa). Residues 231–751 are non-repeat region (NRR); the sequence is PVKLRTFSRL…TTFKYEVTRN (521 aa). Composition is skewed to low complexity over residues 752 to 791, 806 to 1392, and 1402 to 2214; these read SMSD…VVST, SVSA…LSLS, and SNSA…ATSE. A serine-rich repeat region 2, SRR2 region spans residues 752–2232; the sequence is SMSDSVSTSG…AQSEKRLPDT (1481 aa). The short motif at 2229 to 2233 is the LPXTG sorting signal element; that stretch reads LPDTG. A Pentaglycyl murein peptidoglycan amidated threonine modification is found at Thr-2232. The propeptide at 2233–2271 is removed by sortase; the sequence is GDSIKQNGLLGGVMTLLVGLGLMKRKKKKDENDQDDSQA.

It belongs to the serine-rich repeat protein (SRRP) family. In terms of processing, proteolytically cleaved by a metalloprotease. Glycosylated. It is probable that most of the Ser residues in SSR1 and SSR2 are O-GlcNAcylated. Sequential glycosylation by sugar transferases are able to generate complex sugar polymorphisms.

The protein resides in the secreted. The protein localises to the cell wall. In terms of biological role, mediates binding to human platelets, possibly through a receptor-ligand interaction. Probably associated with virulence in endovascular infection. In Staphylococcus aureus (strain Mu50 / ATCC 700699), this protein is Serine-rich adhesin for platelets (sraP).